The chain runs to 293 residues: Elongation factor Ts (293 aa).

Positions 80–83 are involved in Mg(2+) ion dislocation from EF-Tu; sequence TDFV.

This sequence belongs to the EF-Ts family.

Its subcellular location is the cytoplasm. Functionally, associates with the EF-Tu.GDP complex and induces the exchange of GDP to GTP. It remains bound to the aminoacyl-tRNA.EF-Tu.GTP complex up to the GTP hydrolysis stage on the ribosome. The sequence is that of Elongation factor Ts from Burkholderia pseudomallei (strain 1106a).